The primary structure comprises 267 residues: B3 domain-containing protein At3g11580 (267 aa).

The TF-B3 DNA-binding region spans 29-143 (FEKSLTPSDV…RLFIGWRRRG (115 aa)).

Its subcellular location is the nucleus. This chain is B3 domain-containing protein At3g11580 (ARF32), found in Arabidopsis thaliana (Mouse-ear cress).